The following is a 431-amino-acid chain: GTPase Obg (431 aa).

The Obg domain occupies 1 to 158 (MFVDQVKINV…REIRLELKVL (158 aa)). Residues 125–145 (GNIHFASPKNPAPEIAENGEP) are disordered. An OBG-type G domain is found at 159-335 (ADVGLVGFPS…LLQRTADMLA (177 aa)). GTP is bound by residues 165–172 (GFPSVGKS), 190–194 (FTTLV), 212–215 (DLPG), 282–285 (NKMD), and 316–318 (SAL). 2 residues coordinate Mg(2+): Ser172 and Thr192. The region spanning 353–431 (YNFQPEAEFT…IDDFTFEYMA (79 aa)) is the OCT domain.

It belongs to the TRAFAC class OBG-HflX-like GTPase superfamily. OBG GTPase family. In terms of assembly, monomer. Mg(2+) serves as cofactor.

It is found in the cytoplasm. An essential GTPase which binds GTP, GDP and possibly (p)ppGpp with moderate affinity, with high nucleotide exchange rates and a fairly low GTP hydrolysis rate. Plays a role in control of the cell cycle, stress response, ribosome biogenesis and in those bacteria that undergo differentiation, in morphogenesis control. The polypeptide is GTPase Obg (Levilactobacillus brevis (strain ATCC 367 / BCRC 12310 / CIP 105137 / JCM 1170 / LMG 11437 / NCIMB 947 / NCTC 947) (Lactobacillus brevis)).